We begin with the raw amino-acid sequence, 76 residues long: Acyl carrier protein (76 aa).

A Carrier domain is found at 2–76 (KDNFTRLQSI…QDVLNYLERN (75 aa)). At Ser-37 the chain carries O-(pantetheine 4'-phosphoryl)serine.

The protein belongs to the acyl carrier protein (ACP) family. In terms of processing, 4'-phosphopantetheine is transferred from CoA to a specific serine of apo-ACP by AcpS. This modification is essential for activity because fatty acids are bound in thioester linkage to the sulfhydryl of the prosthetic group.

The protein resides in the plastid. It is found in the chloroplast. The protein operates within lipid metabolism; fatty acid biosynthesis. In terms of biological role, carrier of the growing fatty acid chain in fatty acid biosynthesis. The polypeptide is Acyl carrier protein (Phaeodactylum tricornutum (strain CCAP 1055/1)).